The chain runs to 366 residues: Histidinol-phosphate aminotransferase 2 (366 aa).

An N6-(pyridoxal phosphate)lysine modification is found at K226.

This sequence belongs to the class-II pyridoxal-phosphate-dependent aminotransferase family. Histidinol-phosphate aminotransferase subfamily. In terms of assembly, homodimer. The cofactor is pyridoxal 5'-phosphate.

The enzyme catalyses L-histidinol phosphate + 2-oxoglutarate = 3-(imidazol-4-yl)-2-oxopropyl phosphate + L-glutamate. The protein operates within amino-acid biosynthesis; L-histidine biosynthesis; L-histidine from 5-phospho-alpha-D-ribose 1-diphosphate: step 7/9. The protein is Histidinol-phosphate aminotransferase 2 (hisC2) of Haemophilus influenzae (strain ATCC 51907 / DSM 11121 / KW20 / Rd).